We begin with the raw amino-acid sequence, 199 residues long: NAD(P)H dehydrogenase (quinone) (199 aa).

A Flavodoxin-like domain is found at 4–190 (ILVLYYSSWG…EGARFQGKRL (187 aa)). FMN is bound by residues 10 to 15 (SSWGHM) and 78 to 80 (TRY). W12 lines the NAD(+) pocket. W98 contributes to the substrate binding site. Residues 113–119 (STATQHG) and H134 each bind FMN. The interval 155–175 (VRGGAPYGMTTTSDTDGSRMP) is disordered.

It belongs to the WrbA family. FMN serves as cofactor.

The enzyme catalyses a quinone + NADH + H(+) = a quinol + NAD(+). The catalysed reaction is a quinone + NADPH + H(+) = a quinol + NADP(+). The protein is NAD(P)H dehydrogenase (quinone) of Chelativorans sp. (strain BNC1).